The chain runs to 193 residues: Der GTPase-activating protein YihI (193 aa).

Basic residues predominate over residues 1–12; the sequence is MSAKQPNRKPTG. 2 disordered regions span residues 1–91 and 143–193; these read MSAK…KLVM and IIDN…PKKK. The span at 13–26 shows a compositional bias: basic and acidic residues; that stretch reads KRKESDASALDGRE. The span at 27–36 shows a compositional bias: basic residues; it reads RKRAAKRKGL. A compositionally biased stretch (polar residues) spans 40–54; the sequence is SRQQAEQSSKNNNGK. Acidic residues predominate over residues 145–160; sequence DNDDDEEDDGSFDDAS. The segment covering 184–193 has biased composition (basic and acidic residues); the sequence is PEPKPEPKKK.

It belongs to the YihI family. In terms of assembly, interacts with Der.

A GTPase-activating protein (GAP) that modifies Der/EngA GTPase function. May play a role in ribosome biogenesis. In Aeromonas salmonicida (strain A449), this protein is Der GTPase-activating protein YihI.